A 283-amino-acid chain; its full sequence is Large ribosomal subunit protein uL2c (283 aa).

Positions 229–274 (GVVMNPIDHPHGGGEGKVPIGRKKPLTPWGHPALGRKSRKRRKYSD) are disordered. The segment covering 262 to 271 (LGRKSRKRRK) has biased composition (basic residues).

It belongs to the universal ribosomal protein uL2 family. In terms of assembly, part of the 50S ribosomal subunit.

The protein localises to the plastid. In Aneura mirabilis (Parasitic liverwort), this protein is Large ribosomal subunit protein uL2c (rpl2).